A 177-amino-acid polypeptide reads, in one-letter code: Large ribosomal subunit protein bL9 (177 aa).

Residues 151 to 177 (VEEEPAEEVEAPAETEVAEDAEEATEA) are disordered.

It belongs to the bacterial ribosomal protein bL9 family.

In terms of biological role, binds to the 23S rRNA. This Maridesulfovibrio salexigens (strain ATCC 14822 / DSM 2638 / NCIMB 8403 / VKM B-1763) (Desulfovibrio salexigens) protein is Large ribosomal subunit protein bL9.